We begin with the raw amino-acid sequence, 434 residues long: Enolase (434 aa).

Q163 is a binding site for (2R)-2-phosphoglycerate. E205 (proton donor) is an active-site residue. Positions 242, 291, and 318 each coordinate Mg(2+). K343, R372, S373, and K394 together coordinate (2R)-2-phosphoglycerate. Catalysis depends on K343, which acts as the Proton acceptor.

This sequence belongs to the enolase family. It depends on Mg(2+) as a cofactor.

The protein localises to the cytoplasm. Its subcellular location is the secreted. It is found in the cell surface. It localises to the cell wall. It carries out the reaction (2R)-2-phosphoglycerate = phosphoenolpyruvate + H2O. Its pathway is carbohydrate degradation; glycolysis; pyruvate from D-glyceraldehyde 3-phosphate: step 4/5. Its function is as follows. Catalyzes the reversible conversion of 2-phosphoglycerate (2-PG) into phosphoenolpyruvate (PEP). It is essential for the degradation of carbohydrates via glycolysis. The sequence is that of Enolase from Streptococcus pneumoniae serotype 2 (strain D39 / NCTC 7466).